An 868-amino-acid polypeptide reads, in one-letter code: Translation initiation factor IF-2 (868 aa).

The span at 199 to 209 (SKKEEVKPEKV) shows a compositional bias: basic and acidic residues. The tract at residues 199–269 (SKKEEVKPEK…GTEKSDKYRE (71 aa)) is disordered. Residues 249-260 (RGGRSKFKKKKG) show a composition bias toward basic residues. The tr-type G domain occupies 368–537 (GRAPVVTIMG…LLQSEVLELK (170 aa)). Residues 377 to 384 (GHVDHGKT) are G1. Position 377 to 384 (377 to 384 (GHVDHGKT)) interacts with GTP. The interval 402 to 406 (GITQH) is G2. Residues 423–426 (DTPG) form a G3 region. GTP is bound by residues 423–427 (DTPGH) and 477–480 (NKMD). Residues 477 to 480 (NKMD) form a G4 region. The tract at residues 513 to 515 (SAK) is G5.

It belongs to the TRAFAC class translation factor GTPase superfamily. Classic translation factor GTPase family. IF-2 subfamily.

It is found in the cytoplasm. One of the essential components for the initiation of protein synthesis. Protects formylmethionyl-tRNA from spontaneous hydrolysis and promotes its binding to the 30S ribosomal subunits. Also involved in the hydrolysis of GTP during the formation of the 70S ribosomal complex. The chain is Translation initiation factor IF-2 from Legionella pneumophila (strain Paris).